Here is a 390-residue protein sequence, read N- to C-terminus: Succinate--CoA ligase [ADP-forming] subunit beta (390 aa).

Residues 9 to 244 enclose the ATP-grasp domain; the sequence is KEIFREYGVP…LSEEDPVEVE (236 aa). Residues K46, 53–55, E99, A102, and E107 each bind ATP; that span reads GRG. Mg(2+) contacts are provided by N199 and D213. Substrate is bound by residues N264 and 321-323; that span reads GIV.

It belongs to the succinate/malate CoA ligase beta subunit family. As to quaternary structure, heterotetramer of two alpha and two beta subunits. Requires Mg(2+) as cofactor.

It catalyses the reaction succinate + ATP + CoA = succinyl-CoA + ADP + phosphate. It carries out the reaction GTP + succinate + CoA = succinyl-CoA + GDP + phosphate. Its pathway is carbohydrate metabolism; tricarboxylic acid cycle; succinate from succinyl-CoA (ligase route): step 1/1. In terms of biological role, succinyl-CoA synthetase functions in the citric acid cycle (TCA), coupling the hydrolysis of succinyl-CoA to the synthesis of either ATP or GTP and thus represents the only step of substrate-level phosphorylation in the TCA. The beta subunit provides nucleotide specificity of the enzyme and binds the substrate succinate, while the binding sites for coenzyme A and phosphate are found in the alpha subunit. The polypeptide is Succinate--CoA ligase [ADP-forming] subunit beta (Nitratiruptor sp. (strain SB155-2)).